The primary structure comprises 102 residues: Glutaredoxin 1 (102 aa).

The 96-residue stretch at 1–96 (MNKAILHTII…KLLENQPKTT (96 aa)) folds into the Glutaredoxin domain. C17 and C20 are joined by a disulfide.

This sequence belongs to the glutaredoxin family. As to quaternary structure, monomer.

It localises to the cytoplasm. In terms of biological role, has a glutathione-disulfide oxidoreductase activity in the presence of NADPH and glutathione reductase. Reduces low molecular weight disulfides and proteins. This is Glutaredoxin 1 (grxC1) from Rickettsia conorii (strain ATCC VR-613 / Malish 7).